The sequence spans 514 residues: Glutamyl-tRNA(Gln) amidotransferase subunit A (514 aa).

Active-site charge relay system residues include Lys-76 and Ser-151. The active-site Acyl-ester intermediate is the Ser-175.

It belongs to the amidase family. GatA subfamily. In terms of assembly, heterotrimer of A, B and C subunits.

It catalyses the reaction L-glutamyl-tRNA(Gln) + L-glutamine + ATP + H2O = L-glutaminyl-tRNA(Gln) + L-glutamate + ADP + phosphate + H(+). Allows the formation of correctly charged Gln-tRNA(Gln) through the transamidation of misacylated Glu-tRNA(Gln) in organisms which lack glutaminyl-tRNA synthetase. The reaction takes place in the presence of glutamine and ATP through an activated gamma-phospho-Glu-tRNA(Gln). This chain is Glutamyl-tRNA(Gln) amidotransferase subunit A, found in Salinibacter ruber (strain DSM 13855 / M31).